We begin with the raw amino-acid sequence, 201 residues long: FMN-dependent NADH:quinone oxidoreductase (201 aa).

FMN-binding positions include S10, 16 to 18 (SQS), 96 to 99 (MYNF), and 140 to 143 (SRGG).

Belongs to the azoreductase type 1 family. As to quaternary structure, homodimer. FMN is required as a cofactor.

It catalyses the reaction 2 a quinone + NADH + H(+) = 2 a 1,4-benzosemiquinone + NAD(+). The catalysed reaction is N,N-dimethyl-1,4-phenylenediamine + anthranilate + 2 NAD(+) = 2-(4-dimethylaminophenyl)diazenylbenzoate + 2 NADH + 2 H(+). Functionally, quinone reductase that provides resistance to thiol-specific stress caused by electrophilic quinones. Also exhibits azoreductase activity. Catalyzes the reductive cleavage of the azo bond in aromatic azo compounds to the corresponding amines. In Escherichia coli O6:H1 (strain CFT073 / ATCC 700928 / UPEC), this protein is FMN-dependent NADH:quinone oxidoreductase.